Here is a 266-residue protein sequence, read N- to C-terminus: Energy-coupling factor transporter ATP-binding protein EcfA2 (266 aa).

The ABC transporter domain maps to 3–238 (IEVVNVSHIF…YDPRFFTSKM (236 aa)). 43–48 (GSGKST) contributes to the ATP binding site. Glutamate 164 (proton acceptor) is an active-site residue. Residues 220-266 (GTRMEFLEKYDPRFFTSKMLVMRRLVLKGEDPFSMSDDELLERVCNS) are required for heterodimer formation.

This sequence belongs to the ABC transporter superfamily. Energy-coupling factor EcfA family. As to quaternary structure, forms a heterodimer with EcfA1. Forms a stable energy-coupling factor (ECF) transporter complex composed of 2 membrane-embedded substrate-binding proteins (S component, RibU, BioY), 2 ATP-binding proteins (A component) and 2 transmembrane proteins (T component) upon coexpression in E.coli. Stable subcomplexes with both A plus T components can also be isolated. This complex interacts with at least 2 substrate-specific components, BioY and RibU.

The protein resides in the cell inner membrane. Its function is as follows. ATP-binding (A) component of a common energy-coupling factor (ECF) ABC-transporter complex. Unlike classic ABC transporters this ECF transporter provides the energy necessary to transport a number of different substrates. Expression of the complex plus RibU in E.coli allows riboflavin uptake; uptake does not occur in the absence of RibU or the EcfA1A2T complex. In Thermotoga maritima (strain ATCC 43589 / DSM 3109 / JCM 10099 / NBRC 100826 / MSB8), this protein is Energy-coupling factor transporter ATP-binding protein EcfA2 (ecfA2).